Consider the following 203-residue polypeptide: 5-formyltetrahydrofolate cyclo-ligase (203 aa).

N-acetylalanine is present on A2. ATP-binding positions include 10-14 (KRGLR) and R14. Residues L56, E61, and 148 to 152 (RGKGY) contribute to the substrate site. 145 to 153 (RLGRGKGYY) contacts ATP. D154 and D189 together coordinate Mg(2+).

This sequence belongs to the 5-formyltetrahydrofolate cyclo-ligase family. In terms of assembly, monomer. It depends on Mg(2+) as a cofactor.

Its subcellular location is the cytoplasm. It catalyses the reaction (6S)-5-formyl-5,6,7,8-tetrahydrofolate + ATP = (6R)-5,10-methenyltetrahydrofolate + ADP + phosphate. Functionally, contributes to tetrahydrofolate metabolism. Helps regulate carbon flow through the folate-dependent one-carbon metabolic network that supplies carbon for the biosynthesis of purines, thymidine and amino acids. Catalyzes the irreversible conversion of 5-formyltetrahydrofolate (5-CHO-H(4)PteGlu) to yield 5,10-methenyltetrahydrofolate. The polypeptide is 5-formyltetrahydrofolate cyclo-ligase (Mthfs) (Mus musculus (Mouse)).